The following is a 429-amino-acid chain: UPF0597 protein GSU1527 (429 aa).

This sequence belongs to the UPF0597 family.

The polypeptide is UPF0597 protein GSU1527 (Geobacter sulfurreducens (strain ATCC 51573 / DSM 12127 / PCA)).